A 346-amino-acid chain; its full sequence is MPDTATVSSESEFSGHAHVAAPPPAGVDVRHDWSLSEVRALYELPLLDLVHKAQTVHRAVFVDNKVQLCSLLSIKTGGCPEDCSYCPQAARYKTGVKAEKLMAVPDVLDAASKARAAGATRFCMGAAWREVKDGPQFDSVLEMVRGVRALGMEACATLGMLSESQAKRLREAGLSAYNHNLDTSPEHYGDIISTRTYEDRLRTLNRVRDAGISVCCGGIIGMGESVDDRCNLLRTLANQEHHPESVPINALVAVEGTPLQEQQRVETVDMVRTIATARILMPQSMVRLSAGRQQMNEEAQLLCMMAGANSLFFGEKLLTTGNPEYTQDMALLEKAGIRPLEPRQEG.

Over residues 1 to 12 (MPDTATVSSESE) the composition is skewed to polar residues. A disordered region spans residues 1 to 21 (MPDTATVSSESEFSGHAHVAA). Residues 64-292 (NKVQLCSLLS…QSMVRLSAGR (229 aa)) form the Radical SAM core domain. Residues Cys79, Cys83, and Cys86 each contribute to the [4Fe-4S] cluster site. Positions 123, 155, 215, and 287 each coordinate [2Fe-2S] cluster.

It belongs to the radical SAM superfamily. Biotin synthase family. As to quaternary structure, homodimer. Requires [4Fe-4S] cluster as cofactor. The cofactor is [2Fe-2S] cluster.

It carries out the reaction (4R,5S)-dethiobiotin + (sulfur carrier)-SH + 2 reduced [2Fe-2S]-[ferredoxin] + 2 S-adenosyl-L-methionine = (sulfur carrier)-H + biotin + 2 5'-deoxyadenosine + 2 L-methionine + 2 oxidized [2Fe-2S]-[ferredoxin]. It functions in the pathway cofactor biosynthesis; biotin biosynthesis; biotin from 7,8-diaminononanoate: step 2/2. In terms of biological role, catalyzes the conversion of dethiobiotin (DTB) to biotin by the insertion of a sulfur atom into dethiobiotin via a radical-based mechanism. This chain is Biotin synthase, found in Myxococcus xanthus (strain DK1622).